Here is a 439-residue protein sequence, read N- to C-terminus: Tryptophan synthase beta chain 2 (439 aa).

Residue K99 is modified to N6-(pyridoxal phosphate)lysine.

The protein belongs to the TrpB family. Tetramer of two alpha and two beta chains. Pyridoxal 5'-phosphate serves as cofactor.

The catalysed reaction is (1S,2R)-1-C-(indol-3-yl)glycerol 3-phosphate + L-serine = D-glyceraldehyde 3-phosphate + L-tryptophan + H2O. Its pathway is amino-acid biosynthesis; L-tryptophan biosynthesis; L-tryptophan from chorismate: step 5/5. Functionally, the beta subunit is responsible for the synthesis of L-tryptophan from indole and L-serine. The polypeptide is Tryptophan synthase beta chain 2 (trpB2) (Corynebacterium efficiens (strain DSM 44549 / YS-314 / AJ 12310 / JCM 11189 / NBRC 100395)).